Consider the following 308-residue polypeptide: MKQVVIASRESPLAMWQAEHIRARLQALYPGLEVSILGITTQGDRILDKTLNKIGGKGLFVKELELAMQEGQADLAVHSIKDVPMDLPEGFALAAICEREDPRDAFVSSRYASLSELPAGAVVGTASLRRESQIRARYPHLLVKPLRGNLQTRLRKLDEGQYDAIILAASGLKRMGLAERIRMELSTADSLPAVGQGALGIEIRADRTDLMALLAPLNHPATYACVTAERAMGRALGASCQIPVGGYAEQHEHMLVMRGFVATPDGTTLLHAEATAPAEYADALGRTIAKKLLDQGADDVIDAVKAAG.

Cys-240 bears the S-(dipyrrolylmethanemethyl)cysteine mark.

This sequence belongs to the HMBS family. Monomer. It depends on dipyrromethane as a cofactor.

The catalysed reaction is 4 porphobilinogen + H2O = hydroxymethylbilane + 4 NH4(+). It participates in porphyrin-containing compound metabolism; protoporphyrin-IX biosynthesis; coproporphyrinogen-III from 5-aminolevulinate: step 2/4. Its function is as follows. Tetrapolymerization of the monopyrrole PBG into the hydroxymethylbilane pre-uroporphyrinogen in several discrete steps. The protein is Porphobilinogen deaminase of Laribacter hongkongensis (strain HLHK9).